Consider the following 345-residue polypeptide: Phosphoribosylformylglycinamidine cyclo-ligase (345 aa).

This sequence belongs to the AIR synthase family.

The protein resides in the cytoplasm. The enzyme catalyses 2-formamido-N(1)-(5-O-phospho-beta-D-ribosyl)acetamidine + ATP = 5-amino-1-(5-phospho-beta-D-ribosyl)imidazole + ADP + phosphate + H(+). The protein operates within purine metabolism; IMP biosynthesis via de novo pathway; 5-amino-1-(5-phospho-D-ribosyl)imidazole from N(2)-formyl-N(1)-(5-phospho-D-ribosyl)glycinamide: step 2/2. This chain is Phosphoribosylformylglycinamidine cyclo-ligase, found in Escherichia coli (strain SE11).